Here is a 226-residue protein sequence, read N- to C-terminus: ATP synthase subunit a 1 (226 aa).

5 consecutive transmembrane segments (helical) span residues 20-40 (LTIVTTWAVMLLLAGGSWLIT), 78-98 (YLPFIATLFLFIATANLCTVI), 113-133 (ALALSVFIAVPLFGIAESGLV), 174-194 (MILVILLTISPLVFPVLMNIL), and 196-216 (LLTGMVQAYIFSILATVYIAA).

This sequence belongs to the ATPase A chain family. As to quaternary structure, F-type ATPases have 2 components, CF(1) - the catalytic core - and CF(0) - the membrane proton channel. CF(1) has five subunits: alpha(3), beta(3), gamma(1), delta(1), epsilon(1). CF(0) has four main subunits: a, b, b' and c.

The protein resides in the cell inner membrane. In terms of biological role, key component of the proton channel; it plays a direct role in the translocation of protons across the membrane. This Chlorobaculum parvum (strain DSM 263 / NCIMB 8327) (Chlorobium vibrioforme subsp. thiosulfatophilum) protein is ATP synthase subunit a 1.